We begin with the raw amino-acid sequence, 295 residues long: Small ribosomal subunit protein uS2 (295 aa).

Residue Ser2 is modified to N-acetylserine. Ser43 is subject to Phosphoserine. Lys52 is subject to N6-acetyllysine. The segment at 54 to 113 is interaction with PPP1R16B; it reads TWEKLLLAARAIVAIENPADVSVISSRNTGQRAVLKFAAATGATPIAGRFTPGTFTNQIQ. Lys89 carries the N6-acetyllysine; alternate modification. Lys89 is covalently cross-linked (Glycyl lysine isopeptide (Lys-Gly) (interchain with G-Cter in SUMO2); alternate). Thr97 carries the post-translational modification Phosphothreonine. 2 laminin-binding regions span residues 161–180 and 205–229; these read IPCN…MLAR and RDPE…EFQG. [DE]-W-[ST] repeat units follow at residues 230–232, 247–249, 266–268, 275–277, and 293–295; these read EWT, DWS, and EWS. Residues 242 to 295 form a laminin-binding region; the sequence is QPEVADWSEGVQVPSVPIQQFPTEDWSAQPSTEDWSAAPTAQATEWVGTTTEWS. The tract at residues 266–295 is disordered; it reads DWSAQPSTEDWSAAPTAQATEWVGTTTEWS.

This sequence belongs to the universal ribosomal protein uS2 family. In terms of assembly, monomer (37LRP) and homodimer (67LR). Component of the small ribosomal subunit. Mature ribosomes consist of a small (40S) and a large (60S) subunit. The 40S subunit contains about 33 different proteins and 1 molecule of RNA (18S). The 60S subunit contains about 49 different proteins and 3 molecules of RNA (28S, 5.8S and 5S). Interacts with RPS21. Interacts with several laminins including at least LAMB1. Interacts with MDK. The mature dimeric form interacts with PPP1R16B (via its fourth ankyrin repeat). Interacts with PPP1CA only in the presence of PPP1R16B. In terms of processing, acylated. Acylation may be a prerequisite for conversion of the monomeric 37 kDa laminin receptor precursor (37LRP) to the mature dimeric 67 kDa laminin receptor (67LR), and may provide a mechanism for membrane association. Post-translationally, cleaved by stromelysin-3 (ST3) at the cell surface. Cleavage by stromelysin-3 may be a mechanism to alter cell-extracellular matrix interactions.

The protein resides in the cell membrane. The protein localises to the cytoplasm. It localises to the nucleus. Its function is as follows. Required for the assembly and/or stability of the 40S ribosomal subunit. Required for the processing of the 20S rRNA-precursor to mature 18S rRNA in a late step of the maturation of 40S ribosomal subunits. Also functions as a cell surface receptor for laminin. Plays a role in cell adhesion to the basement membrane and in the consequent activation of signaling transduction pathways. May play a role in cell fate determination and tissue morphogenesis. Also acts as a receptor for several other ligands, including the pathogenic prion protein, viruses, and bacteria. Acts as a PPP1R16B-dependent substrate of PPP1CA. This chain is Small ribosomal subunit protein uS2, found in Bos taurus (Bovine).